Reading from the N-terminus, the 124-residue chain is Fluoride-specific ion channel FluC (124 aa).

The next 4 membrane-spanning stretches (helical) occupy residues 4–24 (FLAV…LGLW), 34–54 (LGTL…LAWF), 67–87 (FVIT…AEVV), and 100–120 (LIAF…FYSL). Na(+)-binding residues include Gly-74 and Thr-77.

This sequence belongs to the fluoride channel Fluc/FEX (TC 1.A.43) family.

The protein localises to the cell inner membrane. It carries out the reaction fluoride(in) = fluoride(out). Its activity is regulated as follows. Na(+) is not transported, but it plays an essential structural role and its presence is essential for fluoride channel function. Its function is as follows. Fluoride-specific ion channel. Important for reducing fluoride concentration in the cell, thus reducing its toxicity. The polypeptide is Fluoride-specific ion channel FluC (Thiobacillus denitrificans (strain ATCC 25259 / T1)).